We begin with the raw amino-acid sequence, 219 residues long: Small ribosomal subunit protein uS3c (219 aa).

The region spanning 39–118 (IRSFIRKYIQ…RLNIVITKVE (80 aa)) is the KH type-2 domain.

Belongs to the universal ribosomal protein uS3 family. As to quaternary structure, part of the 30S ribosomal subunit.

The protein localises to the plastid. The protein is Small ribosomal subunit protein uS3c (rps3) of Cuscuta obtusiflora (Peruvian dodder).